The chain runs to 618 residues: Manganese lipoxygenase (618 aa).

The signal sequence occupies residues 1-16 (MRSRILAIVFAARHVA). Over residues 36–45 (SSTTVLPSPT) the composition is skewed to low complexity. The interval 36 to 58 (SSTTVLPSPTQYTLPNNDPNQGA) is disordered. The span at 46–58 (QYTLPNNDPNQGA) shows a compositional bias: polar residues. The region spanning 47 to 617 (YTLPNNDPNQ…NPAVNPFFLS (571 aa)) is the Lipoxygenase domain. Residues asparagine 60, asparagine 91, asparagine 106, asparagine 116, and asparagine 157 are each glycosylated (N-linked (GlcNAc...) asparagine). Residues histidine 290, histidine 294, histidine 478, and asparagine 482 each contribute to the Mn(2+) site. Asparagine 513 is a glycosylation site (N-linked (GlcNAc...) asparagine). Valine 618 serves as a coordination point for Mn(2+).

The protein belongs to the lipoxygenase family. Mn(2+) serves as cofactor. In terms of processing, N- and O-glycosylated.

It is found in the secreted. It carries out the reaction (9Z,12Z)-octadecadienoate + O2 = (11S)-hydroperoxy-(9Z,12Z)-octadecadienoate. The enzyme catalyses (9Z,12Z)-octadecadienoate + O2 = (13R)-hydroperoxy-(9Z,11E)-octadecadienoate. It catalyses the reaction (9Z,12Z,15Z)-octadecatrienoate + O2 = (11S)-hydroperoxy-(9Z,12Z,15Z)-octadecatrienoate. The catalysed reaction is (9Z,12Z,15Z)-octadecatrienoate + O2 = (13R)-hydroperoxy-(9Z,11E,15Z)-octadecatrienoate. Functionally, lipoxygenase that metabolizes linoleic and alpha-linolenic acids to 11S- and 13R-hydroperoxy fatty acids. At the end of lipoxygenation, the intermediate product 11S-HPODE from linoleic acid is then transformed into 13R-HPODE as the final product. It also acts on alpha-linolenic acid producing 11S-HPOTrE and 13R-HPOTrE with subsequent transformation of 11S-HPOTrE to 13R-HPOTrE as the final product. Gamma-linolenic acid is a poor substrate. Oleate and arachidonate are not substrates. This is Manganese lipoxygenase from Gaeumannomyces tritici (Wheat and barley take-all root rot fungus).